Consider the following 386-residue polypeptide: Protein phosphatase methylesterase 1 (386 aa).

The interval M1–K38 is disordered. S15 is subject to Phosphoserine. Residue R16 is modified to Asymmetric dimethylarginine; alternate. Omega-N-methylarginine; alternate is present on R16. Catalysis depends on residues S156 and D181. The segment covering I255–S265 has biased composition (acidic residues). Residues I255 to K280 form a disordered region. Positions V268 to K280 are enriched in basic and acidic residues. Residue H349 is part of the active site.

This sequence belongs to the AB hydrolase superfamily. Binds PPP2CA and PPP2CB. In terms of processing, phosphorylated by SIK1 following increases in intracellular sodium, leading to dissociation from the protein phosphatase 2A (PP2A) complex and subsequent dephosphorylation of sodium/potassium-transporting ATPase ATP1A1. In terms of tissue distribution, ubiquitous. Highly expressed in testis and brain.

The enzyme catalyses [phosphatase 2A protein]-C-terminal L-leucine methyl ester + H2O = [phosphatase 2A protein]-C-terminal L-leucine + methanol + H(+). In terms of biological role, demethylates proteins that have been reversibly carboxymethylated. Demethylates PPP2CB (in vitro) and PPP2CA. Binding to PPP2CA displaces the manganese ion and inactivates the enzyme. This Mus musculus (Mouse) protein is Protein phosphatase methylesterase 1 (Ppme1).